The primary structure comprises 474 residues: Glutamate--tRNA ligase (474 aa).

Residues Pro-9–Gly-19 carry the 'HIGH' region motif. The 'KMSKS' region motif lies at Lys-240–Arg-244. Lys-243 contacts ATP.

Belongs to the class-I aminoacyl-tRNA synthetase family. Glutamate--tRNA ligase type 1 subfamily. As to quaternary structure, monomer.

The protein resides in the cytoplasm. It carries out the reaction tRNA(Glu) + L-glutamate + ATP = L-glutamyl-tRNA(Glu) + AMP + diphosphate. Functionally, catalyzes the attachment of glutamate to tRNA(Glu) in a two-step reaction: glutamate is first activated by ATP to form Glu-AMP and then transferred to the acceptor end of tRNA(Glu). The sequence is that of Glutamate--tRNA ligase from Aliivibrio salmonicida (strain LFI1238) (Vibrio salmonicida (strain LFI1238)).